The chain runs to 266 residues: MKIGKFVIEGNAAIMGILNVTPDSFSDGGSYTTVQKALDHVEQMIADGAKIIDVGGESTRPGCQFVSATDEIDRVVPVIKAIKENYDILISIDTYKTETARAALEAGADILNDVWAGLYDGQMFALAAEYDAPIILMHNQDEEVYQEVTQDVCDFLGNRAQAALDAGVPKNNIWIDPGFGFAKSVQQNMELLKGLDRVCQLGYPVLFGISRKRVVDALLGGNTKAKERDGATAALSAYALGKGCQIVRVHDVKANQDIVAVLSQLM.

In terms of domain architecture, Pterin-binding spans 12-260 (AAIMGILNVT…DVKANQDIVA (249 aa)). Asn-19 contacts Mg(2+). (7,8-dihydropterin-6-yl)methyl diphosphate is bound by residues Thr-59, Asp-93, Asn-112, Asp-176, Lys-212, and 248-250 (RVH).

It belongs to the DHPS family. As to quaternary structure, homodimer or homotrimer. Requires Mg(2+) as cofactor.

The enzyme catalyses (7,8-dihydropterin-6-yl)methyl diphosphate + 4-aminobenzoate = 7,8-dihydropteroate + diphosphate. It functions in the pathway cofactor biosynthesis; tetrahydrofolate biosynthesis; 7,8-dihydrofolate from 2-amino-4-hydroxy-6-hydroxymethyl-7,8-dihydropteridine diphosphate and 4-aminobenzoate: step 1/2. Functionally, catalyzes the condensation of para-aminobenzoate (pABA) with 6-hydroxymethyl-7,8-dihydropterin diphosphate (DHPt-PP) to form 7,8-dihydropteroate (H2Pte), the immediate precursor of folate derivatives. The chain is Dihydropteroate synthase (folP) from Streptococcus pyogenes serotype M6 (strain ATCC BAA-946 / MGAS10394).